The chain runs to 379 residues: Cytochrome b (379 aa).

The next 4 membrane-spanning stretches (helical) occupy residues 33-53 (FGSLLGICLMIQILTGLFLAM), 77-98 (WLIRYLHANGASMFFICLFIHV), 113-133 (WNIGIILFFTTMATAFVGYVL), and 178-198 (FFAFHFILPFIITAFVLVHLL). Heme b contacts are provided by His-83 and His-97. Residues His-182 and His-196 each contribute to the heme b site. Residue His-201 participates in a ubiquinone binding. Transmembrane regions (helical) follow at residues 226–246 (IKDLLGILLLLMALMILALFF), 288–308 (LGGVLALILSILILAAFPLLN), 320–340 (ITQTIYWTFIANLLILTWIGG), and 347–367 (FTMXGXIASITYFIIIIILMP).

This sequence belongs to the cytochrome b family. In terms of assembly, the cytochrome bc1 complex contains 11 subunits: 3 respiratory subunits (MT-CYB, CYC1 and UQCRFS1), 2 core proteins (UQCRC1 and UQCRC2) and 6 low-molecular weight proteins (UQCRH/QCR6, UQCRB/QCR7, UQCRQ/QCR8, UQCR10/QCR9, UQCR11/QCR10 and a cleavage product of UQCRFS1). This cytochrome bc1 complex then forms a dimer. Heme b serves as cofactor.

The protein localises to the mitochondrion inner membrane. Component of the ubiquinol-cytochrome c reductase complex (complex III or cytochrome b-c1 complex) that is part of the mitochondrial respiratory chain. The b-c1 complex mediates electron transfer from ubiquinol to cytochrome c. Contributes to the generation of a proton gradient across the mitochondrial membrane that is then used for ATP synthesis. This Necromys amoenus (Pleasant bolo mouse) protein is Cytochrome b (MT-CYB).